A 610-amino-acid chain; its full sequence is Elongation factor 4 (610 aa).

Residues 13 to 195 (SHIRNFSIVA…AIVHKLPAPK (183 aa)) enclose the tr-type G domain. GTP-binding positions include 25–30 (DHGKST) and 142–145 (NKID).

Belongs to the TRAFAC class translation factor GTPase superfamily. Classic translation factor GTPase family. LepA subfamily.

The protein localises to the cell inner membrane. It carries out the reaction GTP + H2O = GDP + phosphate + H(+). Functionally, required for accurate and efficient protein synthesis under certain stress conditions. May act as a fidelity factor of the translation reaction, by catalyzing a one-codon backward translocation of tRNAs on improperly translocated ribosomes. Back-translocation proceeds from a post-translocation (POST) complex to a pre-translocation (PRE) complex, thus giving elongation factor G a second chance to translocate the tRNAs correctly. Binds to ribosomes in a GTP-dependent manner. The protein is Elongation factor 4 of Rhizobium johnstonii (strain DSM 114642 / LMG 32736 / 3841) (Rhizobium leguminosarum bv. viciae).